Consider the following 817-residue polypeptide: Probable inorganic carbon transporter subunit DabA (817 aa).

Positions 301, 303, 491, and 506 each coordinate Zn(2+). Disordered stretches follow at residues 598–617 and 794–817; these read NTSVDEGRPAAAVRETERRA and GWHARPAPDASTATKAPASAGVPS.

This sequence belongs to the inorganic carbon transporter (TC 9.A.2) DabA family. Forms a complex with DabB. Zn(2+) serves as cofactor.

It is found in the cell inner membrane. Part of an energy-coupled inorganic carbon pump. The polypeptide is Probable inorganic carbon transporter subunit DabA (Salinibacter ruber (strain DSM 13855 / M31)).